Here is a 391-residue protein sequence, read N- to C-terminus: MVSVRCAECKGKLLCGRSKCPLLEKYRFLKEIKIDSRILDPSPPSIFVGRVGYPKVYAGPLVSINADPVYADSPWLWKSIEEVIRLRTSMLRVSRRFRVEDVREEKKELTEMQEMTAAIKPVDVEAEIRKISRKAEFDDVMQPMGYSAIAESIKLAENPKIPDKVEKVYYDDMKAYEALSYLYNHGFSTYYLQKIFSAGILGERKSRKLVPTRWSITAVHSIVGEAIKREIAAYKPIDKTLLFNYEHFGNHFEVILSPENYFFQLVEIWQRKSFWSPKEDWIGVDSEDIRPKRDYSNLSGGYYAARLPVLEYLREKRGQASVLVIREIKPSYYAPLGVWVVEEGVRKALKSKPEVFESFDDALTAASRRVENKEWRALVSRQTSLASFFGF.

The C4-type zinc finger occupies 6-20 (CAECKGKLLCGRSKC). The short motif at 382-389 (QTSLASFF) is the PIP motif element.

Belongs to the Nre family. In terms of assembly, interacts with the DNA polymerase sliding clamp (PCNA) via the PIP (PCNA-interacting peptide) motif.

Functionally, involved in DNA damage repair. This is DNA repair protein NreA from Archaeoglobus fulgidus (strain ATCC 49558 / DSM 4304 / JCM 9628 / NBRC 100126 / VC-16).